The chain runs to 141 residues: Large ribosomal subunit protein uL11 (141 aa).

This sequence belongs to the universal ribosomal protein uL11 family. In terms of assembly, part of the ribosomal stalk of the 50S ribosomal subunit. Interacts with L10 and the large rRNA to form the base of the stalk. L10 forms an elongated spine to which L12 dimers bind in a sequential fashion forming a multimeric L10(L12)X complex. One or more lysine residues are methylated.

In terms of biological role, forms part of the ribosomal stalk which helps the ribosome interact with GTP-bound translation factors. This chain is Large ribosomal subunit protein uL11, found in Listeria innocua serovar 6a (strain ATCC BAA-680 / CLIP 11262).